The primary structure comprises 478 residues: Adenosylhomocysteinase (478 aa).

Residues threonine 56, aspartate 139, and glutamate 201 each coordinate substrate. 202 to 204 contacts NAD(+); the sequence is TTT. Substrate is bound by residues lysine 231 and aspartate 235. NAD(+)-binding positions include asparagine 236, 265-270, glutamate 288, asparagine 323, 344-346, and asparagine 392; these read GYGDVG and IGH.

This sequence belongs to the adenosylhomocysteinase family. NAD(+) is required as a cofactor.

The protein resides in the cytoplasm. The catalysed reaction is S-adenosyl-L-homocysteine + H2O = L-homocysteine + adenosine. It functions in the pathway amino-acid biosynthesis; L-homocysteine biosynthesis; L-homocysteine from S-adenosyl-L-homocysteine: step 1/1. Functionally, may play a key role in the regulation of the intracellular concentration of adenosylhomocysteine. The polypeptide is Adenosylhomocysteinase (Corynebacterium diphtheriae (strain ATCC 700971 / NCTC 13129 / Biotype gravis)).